The sequence spans 335 residues: Fructose-1,6-bisphosphatase class 1 (335 aa).

4 residues coordinate Mg(2+): E92, D114, L116, and D117. Substrate contacts are provided by residues 117-120 (DGSS), N210, Y242, and K274. E280 contacts Mg(2+).

Belongs to the FBPase class 1 family. In terms of assembly, homotetramer. Requires Mg(2+) as cofactor.

Its subcellular location is the cytoplasm. It catalyses the reaction beta-D-fructose 1,6-bisphosphate + H2O = beta-D-fructose 6-phosphate + phosphate. It participates in carbohydrate biosynthesis; gluconeogenesis. In Lawsonia intracellularis (strain PHE/MN1-00), this protein is Fructose-1,6-bisphosphatase class 1.